Reading from the N-terminus, the 204-residue chain is Glycerol-3-phosphate acyltransferase (204 aa).

5 helical membrane-spanning segments follow: residues 8-28, 53-73, 81-101, 116-136, and 155-175; these read ILIF…CYIF, VPAA…VVIA, FITA…IFFG, FGFS…VAII, and VIFT…IIIL.

The protein belongs to the PlsY family. Probably interacts with PlsX.

The protein localises to the cell inner membrane. The enzyme catalyses an acyl phosphate + sn-glycerol 3-phosphate = a 1-acyl-sn-glycero-3-phosphate + phosphate. It functions in the pathway lipid metabolism; phospholipid metabolism. Functionally, catalyzes the transfer of an acyl group from acyl-phosphate (acyl-PO(4)) to glycerol-3-phosphate (G3P) to form lysophosphatidic acid (LPA). This enzyme utilizes acyl-phosphate as fatty acyl donor, but not acyl-CoA or acyl-ACP. This is Glycerol-3-phosphate acyltransferase from Francisella tularensis subsp. novicida (strain U112).